The chain runs to 43 residues: Cytochrome b559 subunit beta (43 aa).

The helical transmembrane segment at 18–34 (WLAIHGLAIPTVFFLGG) threads the bilayer. His22 contributes to the heme binding site.

Belongs to the PsbE/PsbF family. Heterodimer of an alpha subunit and a beta subunit. PSII is composed of 1 copy each of membrane proteins PsbA, PsbB, PsbC, PsbD, PsbE, PsbF, PsbH, PsbI, PsbJ, PsbK, PsbL, PsbM, PsbT, PsbX, PsbY, PsbZ, Psb30/Ycf12, at least 3 peripheral proteins of the oxygen-evolving complex and a large number of cofactors. It forms dimeric complexes. It depends on heme b as a cofactor.

It is found in the plastid. The protein resides in the chloroplast thylakoid membrane. In terms of biological role, this b-type cytochrome is tightly associated with the reaction center of photosystem II (PSII). PSII is a light-driven water:plastoquinone oxidoreductase that uses light energy to abstract electrons from H(2)O, generating O(2) and a proton gradient subsequently used for ATP formation. It consists of a core antenna complex that captures photons, and an electron transfer chain that converts photonic excitation into a charge separation. The sequence is that of Cytochrome b559 subunit beta from Phaeodactylum tricornutum (strain CCAP 1055/1).